A 258-amino-acid chain; its full sequence is F-box/SPRY domain-containing protein 1 (258 aa).

The F-box domain maps to 6 to 54 (TEYAPDIPDNVLELIFSYLKLQDLRNCALVCKSWHRFLSDENNEVWRAQ). Positions 64–256 (FKTDLLSVVP…ISMVYLGPPL (193 aa)) constitute a B30.2/SPRY domain.

This sequence belongs to the FBXO45/Fsn family. As to quaternary structure, component of an E3 ubiquitin ligase complex composed of hiw and Fsn.

It is found in the synapse. It functions in the pathway protein modification; protein ubiquitination. Its function is as follows. Required in the presynaptic motoneuron to down-regulate the levels of wnd and restrain synaptic terminal growth at the neuromuscular junction (NMJ). The protein is F-box/SPRY domain-containing protein 1 of Culex quinquefasciatus (Southern house mosquito).